The following is a 322-amino-acid chain: Transcriptional activator protein Pur-alpha (322 aa).

The disordered stretch occupies residues 1-55; it reads MADRDSGSEQGGAALGSGGSLGHPGSGSGSGGGGGGGGGGGGSGGGGGGAPGGLQ. Alanine 2 carries the post-translational modification N-acetylalanine. Residues 9 to 52 show a composition bias toward gly residues; that stretch reads EQGGAALGSGGSLGHPGSGSGSGGGGGGGGGGGGSGGGGGGAPG. The stretch at 60–125 is one PUR repeat I repeat; sequence ELASKRVDIQ…DFIEHYAQLG (66 aa). A PUR repeat II repeat occupies 142–213; that stretch reads ALKSEFLVRE…KLIDDYGVEE (72 aa). Serine 182 is modified (phosphoserine). The PUR repeat III repeat unit spans residues 215–281; sequence PAELPEGTSL…CKYSEEMKKI (67 aa). Residues 295-314 are compositionally biased toward low complexity; that stretch reads LHQQQQQQQEETAAATLLLQ. The segment at 295 to 322 is disordered; that stretch reads LHQQQQQQQEETAAATLLLQGEEEGEED.

This sequence belongs to the PUR DNA-binding protein family. Homodimer, heterodimer with PURB and heterotrimer with PURB and YBX1/Y-box protein 1. Interacts with FMR1; this interaction occurs in association with polyribosome.

It localises to the nucleus. Functionally, this is a probable transcription activator that specifically binds the purine-rich single strand of the PUR element located upstream of the MYC gene. May play a role in the initiation of DNA replication and in recombination. This Homo sapiens (Human) protein is Transcriptional activator protein Pur-alpha (PURA).